A 148-amino-acid chain; its full sequence is UPF0179 protein Mevan_0979 (148 aa).

Belongs to the UPF0179 family.

The sequence is that of UPF0179 protein Mevan_0979 from Methanococcus vannielii (strain ATCC 35089 / DSM 1224 / JCM 13029 / OCM 148 / SB).